We begin with the raw amino-acid sequence, 799 residues long: Zinc finger X-linked protein ZXDA (799 aa).

Residues Met-1–Phe-89 form a disordered region. Over residues Leu-13–Gly-26 the composition is skewed to gly residues. 10 C2H2-type zinc fingers span residues Tyr-267–His-291, Phe-300–His-324, Phe-330–His-354, Phe-360–His-382, Tyr-389–His-413, Phe-420–His-444, Phe-450–His-474, Phe-480–His-504, Phe-510–His-534, and Ser-543–His-568. The interval Tyr-267 to Asp-573 is required for interaction with ZXDC. The interval Gln-572–Val-699 is required for transcriptional activation.

The protein belongs to the ZXD family. As to quaternary structure, self-associates. Interacts with ZXDC and CIITA. As to expression, may be expressed in brain, heart, kidney, liver, lung, muscle and placenta.

It localises to the nucleus. In terms of biological role, cooperates with CIITA to promote transcription of MHC class I and MHC class II genes. In Homo sapiens (Human), this protein is Zinc finger X-linked protein ZXDA (ZXDA).